The sequence spans 287 residues: Short-chain dehydrogenase virD (287 aa).

NADP(+)-binding residues include valine 10, threonine 36, aspartate 57, asparagine 85, tyrosine 149, lysine 153, valine 182, and threonine 184. Catalysis depends on tyrosine 149, which acts as the Proton acceptor. The active-site Lowers pKa of active site Tyr is lysine 153.

Belongs to the short-chain dehydrogenases/reductases (SDR) family.

It participates in secondary metabolite biosynthesis. In terms of biological role, short-chain dehydrogenase; part of the gene cluster that mediates the biosynthesis of virensols and trichoxide, fungal natural products that contain or are derived from a salicylaldehyde core. The pathway begins with the synthesis of the reduced chain in virensol C by the highly reducing polyketide synthase virA via condensation of one acetate and 8 malonate units. VirA has interesting programming rules since the first 2 ketides are fully reduced, the 3 following ketides undergo beta-dehydration, and the last 3 ketides are only reduced to beta-hydroxys to yield the trihydroxy portion. The production of aldehyde virensol C by virA alone is surprising, since virA does not contain a reductase (R) domain that is typically associated with reductive product release in HRPKS. The cupin-domain enzyme virC is involved in enhancing virA product turnover. The short-chain dehydrogenase virB then oxidizes the C-7 alcohol of virensol C to a ketone, yielding virensol D. Virensol D is further transformed to salicylaldehyde 5-deoxyaurocitrin by the short-chain dehydrogenase virD. VirD catalyzes the dehydrogenation of C-3 to form the beta-ketone aldehyde, which is followed by the generation of the nucleophilic C-2 that is required for the intramolecular aldol condensation between C-2 and C-7, itself followed by dehydration and aromatization which leads to salicylaldehyde 5-deoxyaurocitrin. While the dehydrogenation of virensol D is definitely catalyzed by virD, the aldol condensation and dehydration may be uncatalyzed or assisted by virD. The short chain dehydrogenase virG then converts salicylaldehyde 5-deoxyaurocitrin into virensol B which is further hydroxylated by the cytochrome P450 monooxygenase virE to yield the hydroquinone virensol A. VirI then may oxidize virensol A to form the quinone, while virH performs the epoxidation. Finally, the two remaining short-chain dehydrogenases, virK and virL, are probably responsible for reducing the ketones to the corresponding alcohols to furnish the epoxycyclohexanol structure in trichoxide. This Hypocrea virens (strain Gv29-8 / FGSC 10586) (Gliocladium virens) protein is Short-chain dehydrogenase virD.